The primary structure comprises 123 residues: SPbeta prophage-derived uncharacterized protein YorE (123 aa).

In Bacillus subtilis (strain 168), this protein is SPbeta prophage-derived uncharacterized protein YorE (yorE).